The following is a 93-amino-acid chain: Bombyxin B-11 (93 aa).

A signal peptide spans 1–22; the sequence is MMKTAVMFILVVVISLTYSSEE. 3 disulfides stabilise this stretch: Cys-30–Cys-75, Cys-42–Cys-92, and Cys-74–Cys-79. Residues 49–64 constitute a propeptide, bombyxin B-11 C peptide; it reads GGAQYAPYWQETYLRS.

It belongs to the insulin family. As to quaternary structure, heterodimer of a B chain and an A chain linked by two disulfide bonds.

It localises to the secreted. Its function is as follows. Brain peptide responsible for activation of prothoracic glands to produce ecdysone in insects. This Bombyx mori (Silk moth) protein is Bombyxin B-11 (BBXB11).